We begin with the raw amino-acid sequence, 184 residues long: MKNITDSFVSVGYWSSAGSFGFNTDILATNPINLSVVLGVLIFFGKGVLSDLLDNRKQRILSTIRNSEELRGGAIEQLEKARARLRKVEMEADEFRVNGYSEIERERVNLINATYENLERLEIYKNETIHFEQQRAINQVRQRVFQQALQGALGTLNSCLNSELHLRTISANIGMFGAMKEITD.

Residues 27–49 (LATNPINLSVVLGVLIFFGKGVL) form a helical membrane-spanning segment.

Belongs to the ATPase B chain family. As to quaternary structure, F-type ATPases have 2 components, F(1) - the catalytic core - and F(0) - the membrane proton channel. F(1) has five subunits: alpha(3), beta(3), gamma(1), delta(1), epsilon(1). F(0) has four main subunits: a(1), b(1), b'(1) and c(10-14). The alpha and beta chains form an alternating ring which encloses part of the gamma chain. F(1) is attached to F(0) by a central stalk formed by the gamma and epsilon chains, while a peripheral stalk is formed by the delta, b and b' chains.

The protein resides in the plastid. Its subcellular location is the chloroplast thylakoid membrane. Functionally, f(1)F(0) ATP synthase produces ATP from ADP in the presence of a proton or sodium gradient. F-type ATPases consist of two structural domains, F(1) containing the extramembraneous catalytic core and F(0) containing the membrane proton channel, linked together by a central stalk and a peripheral stalk. During catalysis, ATP synthesis in the catalytic domain of F(1) is coupled via a rotary mechanism of the central stalk subunits to proton translocation. Component of the F(0) channel, it forms part of the peripheral stalk, linking F(1) to F(0). This chain is ATP synthase subunit b, chloroplastic, found in Chloranthus spicatus (Chulantree).